The sequence spans 178 residues: Large ribosomal subunit protein uL6 (178 aa).

Belongs to the universal ribosomal protein uL6 family. In terms of assembly, part of the 50S ribosomal subunit.

Its function is as follows. This protein binds to the 23S rRNA, and is important in its secondary structure. It is located near the subunit interface in the base of the L7/L12 stalk, and near the tRNA binding site of the peptidyltransferase center. The sequence is that of Large ribosomal subunit protein uL6 from Paenarthrobacter aurescens (strain TC1).